Consider the following 278-residue polypeptide: Type II restriction enzyme AgeI (278 aa).

It belongs to the BsaWI type II restriction endonuclease family.

It carries out the reaction Endonucleolytic cleavage of DNA to give specific double-stranded fragments with terminal 5'-phosphates.. Functionally, a P subtype restriction enzyme that recognizes the double-stranded sequence 5'-ACCGGT-3' and cleaves after A-1. The sequence is that of Type II restriction enzyme AgeI (ageIR) from Thalassovita gelatinovora (Thalassobius gelatinovorus).